Here is a 407-residue protein sequence, read N- to C-terminus: Argininosuccinate synthase (407 aa).

Residues 16-24 (AYSGGLDTS) and Ala-44 contribute to the ATP site. L-citrulline contacts are provided by Tyr-96 and Ser-101. Residue Gly-126 participates in ATP binding. L-aspartate contacts are provided by Thr-128, Asn-132, and Asp-133. Residue Asn-132 coordinates L-citrulline. L-citrulline-binding residues include Arg-136, Ser-185, Ser-194, Glu-270, and Tyr-282.

Belongs to the argininosuccinate synthase family. Type 1 subfamily. Homotetramer.

It is found in the cytoplasm. It carries out the reaction L-citrulline + L-aspartate + ATP = 2-(N(omega)-L-arginino)succinate + AMP + diphosphate + H(+). The protein operates within amino-acid biosynthesis; L-arginine biosynthesis; L-arginine from L-ornithine and carbamoyl phosphate: step 2/3. The sequence is that of Argininosuccinate synthase from Shewanella oneidensis (strain ATCC 700550 / JCM 31522 / CIP 106686 / LMG 19005 / NCIMB 14063 / MR-1).